The sequence spans 192 residues: Phosphoheptose isomerase (192 aa).

One can recognise an SIS domain in the interval 36-192 (CVDSLAAGGK…DQVEAVAAPA (157 aa)). 51 to 53 (NGG) provides a ligand contact to substrate. 2 residues coordinate Zn(2+): His60 and Glu64. Substrate-binding positions include Glu64, 93–94 (ND), 119–121 (TTS), Ser124, and Gln171. Residues Gln171 and His179 each coordinate Zn(2+).

The protein belongs to the SIS family. GmhA subfamily. In terms of assembly, homotetramer. Zn(2+) serves as cofactor.

The protein resides in the cytoplasm. It carries out the reaction 2 D-sedoheptulose 7-phosphate = D-glycero-alpha-D-manno-heptose 7-phosphate + D-glycero-beta-D-manno-heptose 7-phosphate. It participates in carbohydrate biosynthesis; D-glycero-D-manno-heptose 7-phosphate biosynthesis; D-glycero-alpha-D-manno-heptose 7-phosphate and D-glycero-beta-D-manno-heptose 7-phosphate from sedoheptulose 7-phosphate: step 1/1. In terms of biological role, catalyzes the isomerization of sedoheptulose 7-phosphate in D-glycero-D-manno-heptose 7-phosphate. The sequence is that of Phosphoheptose isomerase from Paramagnetospirillum magneticum (strain ATCC 700264 / AMB-1) (Magnetospirillum magneticum).